Here is a 729-residue protein sequence, read N- to C-terminus: Polyribonucleotide nucleotidyltransferase (729 aa).

Asp-516 and Asp-522 together coordinate Mg(2+). The 61-residue stretch at 581–641 folds into the KH domain; it reads PSTEHFSINP…EKVAAAKEHI (61 aa). Residues 658–725 form the S1 motif domain; sequence GKTYVGKVKK…KGKKVELATP (68 aa).

It belongs to the polyribonucleotide nucleotidyltransferase family. The cofactor is Mg(2+).

The protein resides in the cytoplasm. The enzyme catalyses RNA(n+1) + phosphate = RNA(n) + a ribonucleoside 5'-diphosphate. Involved in mRNA degradation. Catalyzes the phosphorolysis of single-stranded polyribonucleotides processively in the 3'- to 5'-direction. The sequence is that of Polyribonucleotide nucleotidyltransferase from Sulfurovum sp. (strain NBC37-1).